Consider the following 71-residue polypeptide: MKTVSTVAILAIFLLIVITTIETNRILPTLIGPLGRRSKLETFKRIARTLSAGISAKRSLEDVNSLTGMSS.

The first 23 residues, 1-23 (MKTVSTVAILAIFLLIVITTIET), serve as a signal peptide directing secretion. Position 34 is a leucine amide (leucine 34). Positions 38-71 (SKLETFKRIARTLSAGISAKRSLEDVNSLTGMSS) are excised as a propeptide.

This sequence belongs to the non-disulfide-bridged peptide (NDBP) superfamily. Short antimicrobial peptide (group 4) family. Expressed by the venom gland.

The protein localises to the secreted. In terms of biological role, antimicrobial peptide. The protein is Peptide Ctri9819 of Chaerilus tricostatus (Scorpion).